Consider the following 681-residue polypeptide: Cadmium, zinc and cobalt-transporting ATPase (681 aa).

In terms of domain architecture, HMA spans 1–66; that stretch reads MQKYHFTGLD…LEPDMELSEQ (66 aa). Residues 1–72 are Cytoplasmic-facing; the sequence is MQKYHFTGLD…LSEQVQSEAK (72 aa). The Cd(2+) site is built by Cys-11 and Cys-14. The Co(2+) site is built by Cys-11 and Cys-14. Zn(2+) is bound by residues Cys-11 and Cys-14. A helical membrane pass occupies residues 73–92; that stretch reads PSAIPLLLSVVLYLIAVATI. Topologically, residues 93–102 are extracellular; it reads HFSAQNWALH. Residues 103 to 124 form a helical membrane-spanning segment; sequence LSYALLAGVYLVAGKDVFLGAL. Residues 125 to 131 are Cytoplasmic-facing; that stretch reads RAIRNKQ. The helical transmembrane segment at 132–151 threads the bilayer; it reads FFDENTLMLSATIAAFGVGA. Residues 152 to 154 lie on the Extracellular side of the membrane; that stretch reads HEE. The helical transmembrane segment at 155 to 174 threads the bilayer; sequence AVSIMVFYSAGEFLQQLAIA. The Cytoplasmic segment spans residues 175–308; the sequence is RSKQSLHALL…ITTFARYYTP (134 aa). Residues 309-327 form a helical membrane-spanning segment; it reads AVFAIALLIALVPPLLGHG. At 328–332 the chain is on the extracellular side; that stretch reads DFDTW. A helical transmembrane segment spans residues 333–350; it reads IYRGLFALMVSCPCALVI. Topologically, residues 351 to 630 are cytoplasmic; the sequence is SVPLGYFGGV…VFKIAKKTKR (280 aa). Asp-388 functions as the 4-aspartylphosphate intermediate in the catalytic mechanism. Mg(2+)-binding residues include Asp-578 and Asp-582. The chain crosses the membrane as a helical span at residues 631-652; that stretch reads IIIENIIFALAIKAMFIVLGLS. Over 653-660 the chain is Extracellular; it reads GDASLWEA. Residues 661–676 form a helical membrane-spanning segment; the sequence is VLGDVGVTLIALANSM. Residues 677-681 lie on the Cytoplasmic side of the membrane; that stretch reads RTMRI.

Belongs to the cation transport ATPase (P-type) (TC 3.A.3) family. Type IB subfamily.

The protein localises to the cell membrane. It carries out the reaction Zn(2+)(in) + ATP + H2O = Zn(2+)(out) + ADP + phosphate + H(+). The catalysed reaction is Cd(2+)(in) + ATP + H2O = Cd(2+)(out) + ADP + phosphate + H(+). Couples the hydrolysis of ATP with the transport of cadmium, zinc and cobalt out of the cell. The polypeptide is Cadmium, zinc and cobalt-transporting ATPase (cadA) (Helicobacter felis).